A 247-amino-acid chain; its full sequence is Cell division protein ZapD (247 aa).

The protein belongs to the ZapD family. In terms of assembly, interacts with FtsZ.

The protein resides in the cytoplasm. Functionally, cell division factor that enhances FtsZ-ring assembly. Directly interacts with FtsZ and promotes bundling of FtsZ protofilaments, with a reduction in FtsZ GTPase activity. This Salmonella arizonae (strain ATCC BAA-731 / CDC346-86 / RSK2980) protein is Cell division protein ZapD.